The sequence spans 52 residues: MFEPCLYTFTFAVLPFIDKYITNGSVNAANCDISISFTTEYVPDIFCSMLTF.

This is an uncharacterized protein from Thermoproteus tenax (TTV1).